The sequence spans 347 residues: tRNA N6-adenosine threonylcarbamoyltransferase (347 aa).

Positions 115 and 119 each coordinate Fe cation. Residues 137 to 141, aspartate 170, glycine 183, and asparagine 281 each bind substrate; that span reads LASGG. Fe cation is bound at residue aspartate 309.

It belongs to the KAE1 / TsaD family. The cofactor is Fe(2+).

Its subcellular location is the cytoplasm. The enzyme catalyses L-threonylcarbamoyladenylate + adenosine(37) in tRNA = N(6)-L-threonylcarbamoyladenosine(37) in tRNA + AMP + H(+). Its function is as follows. Required for the formation of a threonylcarbamoyl group on adenosine at position 37 (t(6)A37) in tRNAs that read codons beginning with adenine. Is involved in the transfer of the threonylcarbamoyl moiety of threonylcarbamoyl-AMP (TC-AMP) to the N6 group of A37, together with TsaE and TsaB. TsaD likely plays a direct catalytic role in this reaction. The polypeptide is tRNA N6-adenosine threonylcarbamoyltransferase (Methylorubrum populi (strain ATCC BAA-705 / NCIMB 13946 / BJ001) (Methylobacterium populi)).